Consider the following 139-residue polypeptide: D-ribose pyranase (139 aa).

Catalysis depends on histidine 20, which acts as the Proton donor. Substrate-binding positions include aspartate 28, histidine 106, and 128–130 (YAN).

The protein belongs to the RbsD / FucU family. RbsD subfamily. As to quaternary structure, homodecamer.

The protein resides in the cytoplasm. The catalysed reaction is beta-D-ribopyranose = beta-D-ribofuranose. It functions in the pathway carbohydrate metabolism; D-ribose degradation; D-ribose 5-phosphate from beta-D-ribopyranose: step 1/2. Catalyzes the interconversion of beta-pyran and beta-furan forms of D-ribose. This chain is D-ribose pyranase, found in Salmonella paratyphi B (strain ATCC BAA-1250 / SPB7).